The chain runs to 137 residues: Protein cornichon homolog 3 (137 aa).

The next 3 membrane-spanning stretches (helical) occupy residues 8–28 (IISF…LISL), 54–74 (ILQG…MALL), and 113–133 (LAYI…STLD).

It belongs to the cornichon family.

The protein resides in the membrane. In Arabidopsis thaliana (Mouse-ear cress), this protein is Protein cornichon homolog 3.